Reading from the N-terminus, the 480-residue chain is Caspase-8 (480 aa).

Positions 1-218 (MDFQSCLYAI…ELCDSPREQD (218 aa)) are excised as a propeptide. DED domains follow at residues 3 to 80 (FQSC…NFLD) and 101 to 177 (YRVM…KIED). A phosphoserine mark is found at serine 188 and serine 213. Lysine 226 carries the N6-acetyllysine modification. The active site involves histidine 319. Tyrosine 336 bears the Phosphotyrosine mark. Cysteine 362 is an active-site residue. Residues 377–387 (FEQQNHTLEVD) constitute a propeptide that is removed on maturation. Serine 389 carries the post-translational modification Phosphoserine; by CDK1.

Belongs to the peptidase C14A family. In terms of assembly, heterotetramer that consists of two anti-parallel arranged heterodimers, each one formed by a 18 kDa (p18) and a 10 kDa (p10) subunit. Component of the death-induced signaling complex (DISC) composed of cell surface receptor FAS/CD95 or TNFRSF1A, adapter protein FADD and the CASP8 protease; recruitment of CASP8 to the complex is required for processing of CASP8 into the p18 and p10 subunits. Component of the AIM2 PANoptosome complex, a multiprotein complex that drives inflammatory cell death (PANoptosis). Interacts with CFLAR and PEA15. Interacts with RFFL and RNF34; negatively regulate CASP8 through proteasomal degradation. Interacts with TNFAIP8L2. Interacts with CASP8AP2. Interacts with NOL3; decreases CASP8 activity in a mitochondria localization- and phosphorylation-dependent manner and this interaction is dissociated by calcium. Interacts with UBR2. Interacts with RIPK1. Interacts with stimulated TNFRSF10B; this interaction is followed by CASP8 proteolytic cleavage and activation. In terms of processing, generation of the subunits requires association with the death-inducing signaling complex (DISC), whereas additional processing is likely due to the autocatalytic activity of the activated protease. GZMB and CASP10 can be involved in these processing events. (Microbial infection) Proteolytically cleaved by the cowpox virus CRMA death inhibitory protein. Post-translationally, phosphorylation on Ser-389 during mitosis by CDK1 inhibits activation by proteolysis and prevents apoptosis. This phosphorylation occurs in cancer cell lines, as well as in primary breast tissues and lymphocytes. Expressed in a wide variety of tissues. Highest expression in spleen, thymus, lung, liver and kidney. Lower expression in heart, brain, testis and skeletal muscle.

Its subcellular location is the cytoplasm. The protein localises to the nucleus. The enzyme catalyses Strict requirement for Asp at position P1 and has a preferred cleavage sequence of (Leu/Asp/Val)-Glu-Thr-Asp-|-(Gly/Ser/Ala).. CASP8 activity is restricted by RIPK1. With respect to regulation, (Microbial infection) Inhibited by baculovirus p35 protein P35. Functionally, thiol protease that plays a key role in programmed cell death by acting as a molecular switch for apoptosis, necroptosis and pyroptosis, and is required to prevent tissue damage during embryonic development and adulthood. Initiator protease that induces extrinsic apoptosis by mediating cleavage and activation of effector caspases responsible for FAS/CD95-mediated and TNFRSF1A-induced cell death. Cleaves and activates effector caspases CASP3, CASP4, CASP6, CASP7, CASP9 and CASP10. Binding to the adapter molecule FADD recruits it to either receptor FAS/CD95 or TNFRSF1A. The resulting aggregate called the death-inducing signaling complex (DISC) performs CASP8 proteolytic activation. The active dimeric enzyme is then liberated from the DISC and free to activate downstream apoptotic proteases. Proteolytic fragments of the N-terminal propeptide (termed CAP3, CAP5 and CAP6) are likely retained in the DISC. In addition to extrinsic apoptosis, also acts as a negative regulator of necroptosis: acts by cleaving RIPK1 at 'Asp-325', which is crucial to inhibit RIPK1 kinase activity, limiting TNF-induced apoptosis, necroptosis and inflammatory response. Also able to initiate pyroptosis by mediating cleavage and activation of gasdermin-C and -D (GSDMC and GSDMD, respectively): gasdermin cleavage promotes release of the N-terminal moiety that binds to membranes and forms pores, triggering pyroptosis. Initiates pyroptosis following inactivation of MAP3K7/TAK1. Also acts as a regulator of innate immunity by mediating cleavage and inactivation of N4BP1 downstream of TLR3 or TLR4, thereby promoting cytokine production. May participate in the Granzyme B (GZMB) cell death pathways. Cleaves PARP1 and PARP2. This Mus musculus (Mouse) protein is Caspase-8.